We begin with the raw amino-acid sequence, 208 residues long: N-(5'-phosphoribosyl)anthranilate isomerase (208 aa).

It belongs to the TrpF family.

The enzyme catalyses N-(5-phospho-beta-D-ribosyl)anthranilate = 1-(2-carboxyphenylamino)-1-deoxy-D-ribulose 5-phosphate. The protein operates within amino-acid biosynthesis; L-tryptophan biosynthesis; L-tryptophan from chorismate: step 3/5. In Methanococcus maripaludis (strain C5 / ATCC BAA-1333), this protein is N-(5'-phosphoribosyl)anthranilate isomerase.